Reading from the N-terminus, the 186-residue chain is ATP synthase subunit delta (186 aa).

This sequence belongs to the ATPase delta chain family. In terms of assembly, F-type ATPases have 2 components, F(1) - the catalytic core - and F(0) - the membrane proton channel. F(1) has five subunits: alpha(3), beta(3), gamma(1), delta(1), epsilon(1). CF(0) has four main subunits: a(1), b(1), b'(1) and c(10-14). The alpha and beta chains form an alternating ring which encloses part of the gamma chain. F(1) is attached to F(0) by a central stalk formed by the gamma and epsilon chains, while a peripheral stalk is formed by the delta, b and b' chains.

It localises to the cell inner membrane. F(1)F(0) ATP synthase produces ATP from ADP in the presence of a proton or sodium gradient. F-type ATPases consist of two structural domains, F(1) containing the extramembraneous catalytic core and F(0) containing the membrane proton channel, linked together by a central stalk and a peripheral stalk. During catalysis, ATP synthesis in the catalytic domain of F(1) is coupled via a rotary mechanism of the central stalk subunits to proton translocation. Functionally, this protein is part of the stalk that links CF(0) to CF(1). It either transmits conformational changes from CF(0) to CF(1) or is implicated in proton conduction. The chain is ATP synthase subunit delta from Rhodopseudomonas palustris (strain BisA53).